The following is a 59-amino-acid chain: Protein HOR7 (59 aa).

The signal sequence occupies residues 1–19; sequence MKLSQVVVSAVAFTGLVSA.

It to yeast DDR2.

This Saccharomyces cerevisiae (strain ATCC 204508 / S288c) (Baker's yeast) protein is Protein HOR7 (HOR7).